The following is a 343-amino-acid chain: 4-hydroxy-2-oxovalerate aldolase 4 (343 aa).

One can recognise a Pyruvate carboxyltransferase domain in the interval 8-260; that stretch reads VTVHDMTLRD…ETGVDVAKIT (253 aa). Residue 16-17 participates in substrate binding; sequence RD. Residue D17 coordinates Mn(2+). The active-site Proton acceptor is H20. 2 residues coordinate substrate: S170 and H199. The Mn(2+) site is built by H199 and H201. Y290 is a binding site for substrate.

It belongs to the 4-hydroxy-2-oxovalerate aldolase family.

The catalysed reaction is (S)-4-hydroxy-2-oxopentanoate = acetaldehyde + pyruvate. In Dechloromonas aromatica (strain RCB), this protein is 4-hydroxy-2-oxovalerate aldolase 4.